Here is a 411-residue protein sequence, read N- to C-terminus: Putative binding protein BRA0748/BS1330_II0741 (411 aa).

The signal sequence occupies residues 1–25 (MLIRKWKAGLLAGLSILALASSADA).

This sequence belongs to the bacterial solute-binding protein 1 family. As to quaternary structure, the complex is composed of two ATP-binding proteins (BRA0745), two transmembrane proteins (BRA0749) and a solute-binding protein (BRA0748).

It localises to the periplasm. In terms of biological role, probably part of an ABC transporter complex. This is Putative binding protein BRA0748/BS1330_II0741 from Brucella suis biovar 1 (strain 1330).